Consider the following 145-residue polypeptide: Small ribosomal subunit protein uS9 (145 aa).

Belongs to the universal ribosomal protein uS9 family.

It localises to the cytoplasm. This Fritillaria agrestis (Stinkbells) protein is Small ribosomal subunit protein uS9 (RPS16).